We begin with the raw amino-acid sequence, 238 residues long: Small ribosomal subunit protein eS4 (238 aa).

In terms of domain architecture, S4 RNA-binding spans 38–100; sequence LPLAIVIRDV…TGEVYRVVPD (63 aa).

This sequence belongs to the eukaryotic ribosomal protein eS4 family.

This Pyrobaculum arsenaticum (strain DSM 13514 / JCM 11321 / PZ6) protein is Small ribosomal subunit protein eS4.